The primary structure comprises 66 residues: Large ribosomal subunit protein uL29 (66 aa).

The protein belongs to the universal ribosomal protein uL29 family.

This chain is Large ribosomal subunit protein uL29 (rpmC), found in Helicobacter pylori (strain J99 / ATCC 700824) (Campylobacter pylori J99).